We begin with the raw amino-acid sequence, 356 residues long: 3-dehydroquinate synthase (356 aa).

NAD(+)-binding positions include 106–110 (GVVGD), 130–131 (TS), K143, K152, and 170–173 (FLKT). Residues E185, H246, and H263 each coordinate Zn(2+).

Belongs to the sugar phosphate cyclases superfamily. Dehydroquinate synthase family. Requires NAD(+) as cofactor. The cofactor is Co(2+). Zn(2+) is required as a cofactor.

The protein localises to the cytoplasm. It carries out the reaction 7-phospho-2-dehydro-3-deoxy-D-arabino-heptonate = 3-dehydroquinate + phosphate. Its pathway is metabolic intermediate biosynthesis; chorismate biosynthesis; chorismate from D-erythrose 4-phosphate and phosphoenolpyruvate: step 2/7. Its function is as follows. Catalyzes the conversion of 3-deoxy-D-arabino-heptulosonate 7-phosphate (DAHP) to dehydroquinate (DHQ). This is 3-dehydroquinate synthase from Clostridium acetobutylicum (strain ATCC 824 / DSM 792 / JCM 1419 / IAM 19013 / LMG 5710 / NBRC 13948 / NRRL B-527 / VKM B-1787 / 2291 / W).